Consider the following 157-residue polypeptide: Universal stress protein Sll1654 (157 aa).

The protein belongs to the universal stress protein A family.

This is Universal stress protein Sll1654 from Synechocystis sp. (strain ATCC 27184 / PCC 6803 / Kazusa).